The following is a 349-amino-acid chain: Protein DMR6-LIKE OXYGENASE 1 (349 aa).

A Fe2OG dioxygenase domain is found at 197-296 (HAQHMAFNYY…RLSIPTFYFP (100 aa)). 2-oxoglutarate is bound at residue tyrosine 206. Fe cation-binding residues include histidine 221, aspartate 223, and histidine 277. Residues arginine 287 and serine 289 each coordinate 2-oxoglutarate.

Belongs to the iron/ascorbate-dependent oxidoreductase family. L-ascorbate serves as cofactor. Fe(2+) is required as a cofactor.

The enzyme catalyses salicylate + NADH + O2 + H(+) = 2,3-dihydroxybenzoate + NAD(+) + H2O. Its function is as follows. Converts salicylic acid (SA) to both 2,3-dihydroxybenzoic acid (2,3-DHBA) and 2,5-DHBA in vitro but only 2,3-DHBA in vivo. Component of a negative feedback regulation system of SA levels during senescence. Regulates both onset and progression of leaf senescence. Negative regulator of defense against Hyaloperonospora arabidopsidis. In terms of biological role, (Microbial infection) Confers susceptibility to the downy mildew pathogen Hyaloperonospora arabidopsidis. The chain is Protein DMR6-LIKE OXYGENASE 1 from Arabidopsis thaliana (Mouse-ear cress).